Consider the following 1074-residue polypeptide: Insulin receptor substrate 2-A (1074 aa).

Residues 1-64 (MAGVLCPTEE…PPASAAEDDV (64 aa)) are disordered. 2 consecutive short sequence motifs (YXXM motif) follow at residues 33 to 36 (YRRM) and 145 to 148 (YFAM). Residues 63–168 (DVRKRGYLRK…WYQALSELIN (106 aa)) enclose the PH domain. Residues 193–297 (FKEVWQVNVK…DTMKALKAYS (105 aa)) form the IRS-type PTB domain. Disordered regions lie at residues 326–370 (PPSQ…RPFR), 426–461 (CSSSGHGSASETLTRPSSSSVCGSPSDGGFISSDEY), and 475–510 (SNTPDSLGNTPPIQEENTLSDYMSMSTHSQPDSRDD). Residues 347-361 (SAKNNSFRFRTSSEG) show a composition bias toward polar residues. Composition is skewed to low complexity over residues 426-435 (CSSSGHGSAS) and 442-454 (SSSSVCGSPSDGG). Over residues 475 to 504 (SNTPDSLGNTPPIQEENTLSDYMSMSTHSQ) the composition is skewed to polar residues. 6 short sequence motifs (YXXM motif) span residues 496-499 (YMSM), 592-595 (YMPM), 605-608 (YLPM), 631-634 (YMMM), 663-666 (YMDM), and 710-713 (YVPM). The segment at 801 to 821 (TPYSLSADGSPSSLGSSCDHR) is disordered. Residues 804 to 817 (SLSADGSPSSLGSS) are compositionally biased toward low complexity. A YXXM motif 9 motif is present at residues 888–891 (YTTM).

Phosphorylated by INSR.

Its function is as follows. Potentiates insulin signaling. This chain is Insulin receptor substrate 2-A (irs2-a), found in Xenopus laevis (African clawed frog).